The following is a 103-amino-acid chain: Co-chaperonin GroES (103 aa).

It belongs to the GroES chaperonin family. In terms of assembly, heptamer of 7 subunits arranged in a ring. Interacts with the chaperonin GroEL.

It is found in the cytoplasm. In terms of biological role, together with the chaperonin GroEL, plays an essential role in assisting protein folding. The GroEL-GroES system forms a nano-cage that allows encapsulation of the non-native substrate proteins and provides a physical environment optimized to promote and accelerate protein folding. GroES binds to the apical surface of the GroEL ring, thereby capping the opening of the GroEL channel. In Dinoroseobacter shibae (strain DSM 16493 / NCIMB 14021 / DFL 12), this protein is Co-chaperonin GroES.